The sequence spans 352 residues: RNA 3'-terminal phosphate cyclase (352 aa).

ATP-binding positions include Q100 and 297–301 (HLADQ). H322 functions as the Tele-AMP-histidine intermediate in the catalytic mechanism.

It belongs to the RNA 3'-terminal cyclase family. Type 1 subfamily.

The protein localises to the cytoplasm. It carries out the reaction a 3'-end 3'-phospho-ribonucleotide-RNA + ATP = a 3'-end 2',3'-cyclophospho-ribonucleotide-RNA + AMP + diphosphate. Its function is as follows. Catalyzes the conversion of 3'-phosphate to a 2',3'-cyclic phosphodiester at the end of RNA. The mechanism of action of the enzyme occurs in 3 steps: (A) adenylation of the enzyme by ATP; (B) transfer of adenylate to an RNA-N3'P to produce RNA-N3'PP5'A; (C) and attack of the adjacent 2'-hydroxyl on the 3'-phosphorus in the diester linkage to produce the cyclic end product. The biological role of this enzyme is unknown but it is likely to function in some aspects of cellular RNA processing. The sequence is that of RNA 3'-terminal phosphate cyclase from Methanosarcina mazei (strain ATCC BAA-159 / DSM 3647 / Goe1 / Go1 / JCM 11833 / OCM 88) (Methanosarcina frisia).